Reading from the N-terminus, the 336-residue chain is Holliday junction branch migration complex subunit RuvB (336 aa).

A large ATPase domain (RuvB-L) region spans residues 4-184 (ADRLVSADSS…FGIVQRLEFY (181 aa)). ATP-binding positions include Ile-23, Arg-24, Gly-65, Lys-68, Thr-69, Thr-70, 131-133 (EDY), Arg-174, Tyr-184, and Arg-221. Thr-69 is a Mg(2+) binding site. The small ATPAse domain (RuvB-S) stretch occupies residues 185–255 (QIPDLQHIVS…IAAQALDMLN (71 aa)). Positions 258-336 (AEGFDYMDRK…HFGITPPEMP (79 aa)) are head domain (RuvB-H). The DNA site is built by Arg-294, Arg-313, and Arg-318.

This sequence belongs to the RuvB family. Homohexamer. Forms an RuvA(8)-RuvB(12)-Holliday junction (HJ) complex. HJ DNA is sandwiched between 2 RuvA tetramers; dsDNA enters through RuvA and exits via RuvB. An RuvB hexamer assembles on each DNA strand where it exits the tetramer. Each RuvB hexamer is contacted by two RuvA subunits (via domain III) on 2 adjacent RuvB subunits; this complex drives branch migration. In the full resolvosome a probable DNA-RuvA(4)-RuvB(12)-RuvC(2) complex forms which resolves the HJ.

Its subcellular location is the cytoplasm. The enzyme catalyses ATP + H2O = ADP + phosphate + H(+). Its function is as follows. The RuvA-RuvB-RuvC complex processes Holliday junction (HJ) DNA during genetic recombination and DNA repair, while the RuvA-RuvB complex plays an important role in the rescue of blocked DNA replication forks via replication fork reversal (RFR). RuvA specifically binds to HJ cruciform DNA, conferring on it an open structure. The RuvB hexamer acts as an ATP-dependent pump, pulling dsDNA into and through the RuvAB complex. RuvB forms 2 homohexamers on either side of HJ DNA bound by 1 or 2 RuvA tetramers; 4 subunits per hexamer contact DNA at a time. Coordinated motions by a converter formed by DNA-disengaged RuvB subunits stimulates ATP hydrolysis and nucleotide exchange. Immobilization of the converter enables RuvB to convert the ATP-contained energy into a lever motion, pulling 2 nucleotides of DNA out of the RuvA tetramer per ATP hydrolyzed, thus driving DNA branch migration. The RuvB motors rotate together with the DNA substrate, which together with the progressing nucleotide cycle form the mechanistic basis for DNA recombination by continuous HJ branch migration. Branch migration allows RuvC to scan DNA until it finds its consensus sequence, where it cleaves and resolves cruciform DNA. The protein is Holliday junction branch migration complex subunit RuvB of Klebsiella pneumoniae (strain 342).